The chain runs to 318 residues: Biotin synthase (318 aa).

Residues 36–258 enclose the Radical SAM core domain; the sequence is HDPREVQLCT…VATTRILFPD (223 aa). The [4Fe-4S] cluster site is built by cysteine 54, cysteine 58, and cysteine 61. [2Fe-2S] cluster is bound by residues cysteine 98, cysteine 130, cysteine 190, and arginine 262.

Belongs to the radical SAM superfamily. Biotin synthase family. Homodimer. [4Fe-4S] cluster serves as cofactor. Requires [2Fe-2S] cluster as cofactor.

The enzyme catalyses (4R,5S)-dethiobiotin + (sulfur carrier)-SH + 2 reduced [2Fe-2S]-[ferredoxin] + 2 S-adenosyl-L-methionine = (sulfur carrier)-H + biotin + 2 5'-deoxyadenosine + 2 L-methionine + 2 oxidized [2Fe-2S]-[ferredoxin]. It functions in the pathway cofactor biosynthesis; biotin biosynthesis; biotin from 7,8-diaminononanoate: step 2/2. Functionally, catalyzes the conversion of dethiobiotin (DTB) to biotin by the insertion of a sulfur atom into dethiobiotin via a radical-based mechanism. In Gloeobacter violaceus (strain ATCC 29082 / PCC 7421), this protein is Biotin synthase.